Reading from the N-terminus, the 463-residue chain is Chromogranin-A (463 aa).

The signal sequence occupies residues 1 to 18; that stretch reads MRSTAVLALLLCAGQVFA. The cysteines at positions 35 and 56 are disulfide-linked. Residues 88–440 form a disordered region; the sequence is KERAQQPLKQ…ANRRAEDQEL (353 aa). Positions 92–116 are enriched in low complexity; the sequence is QQPLKQQQPPKQQQQQQQQQQQEQQ. Phosphoserine is present on serine 119. Over residues 134–160 the composition is skewed to basic and acidic residues; sequence DAKHRDAAAEVPSRDTMEKRKDSDKGQ. A compositionally biased stretch (polar residues) spans 196–208; the sequence is TATNTQSPTSLPS. Phosphoserine is present on residues serine 220, serine 282, and serine 308. Over residues 301–310 the composition is skewed to basic and acidic residues; sequence GKGELEHSQQ. Glycine amide is present on glycine 329. 2 stretches are compositionally biased toward basic and acidic residues: residues 331-340 and 348-375; these read KGRELEHKQE and RLSREWEDKRWSRMDQLAKELTAEKRLE. 2 positions are modified to phosphoserine: serine 350 and serine 383. Methionine sulfoxide is present on methionine 384. Residues 409 to 437 are compositionally biased toward basic and acidic residues; sequence SSREDSVEARSDFEEKKEEEGSANRRAED. A phosphoserine mark is found at serine 410, serine 414, and serine 430. The O-linked (Xyl...) (chondroitin sulfate) serine glycan is linked to serine 430. Glutamine 438 is subject to Pyrrolidone carboxylic acid. Serine 444 bears the Phosphoserine mark.

This sequence belongs to the chromogranin/secretogranin protein family. As to quaternary structure, self-interacts; self-assembly is promoted in vitro by chondroitin sulfate attachment which occurs at mildly acidic pH conditions. Interacts with SCG3; this interaction is optimal in conditions mimicking the lumenal milieu of the trans-Golgi network, i.e. pH 5.5 and 10 mM Ca(+2). Interacts with ITPR1 in the secretory granules. O-glycosylated; contains chondroitin sulfate (CS). CS attachment is pH-dependent, being observed at mildly acidic conditions of pH 5 but not at neutral pH, and promotes self-assembly in vitro.

The protein resides in the cytoplasmic vesicle. The protein localises to the secretory vesicle. It localises to the neuronal dense core vesicle. Its subcellular location is the secreted. Its function is as follows. Strongly inhibits glucose induced insulin release from the pancreas. Inhibits catecholamine release from chromaffin cells and noradrenergic neurons by acting as a non-competitive nicotinic cholinergic antagonist. Can induce mast cell migration, degranulation and production of cytokines and chemokines. In terms of biological role, regulates granule biogenesis in endocrine cells by up-regulating the transcription of protease nexin 1 (SERPINE2) via a cAMP-PKA-SP1 pathway. This leads to inhibition of granule protein degradation in the Golgi complex which in turn promotes granule formation. Pyroglutaminated (pGlu)-serpinin exerts an antiapoptotic effect on cells exposed to oxidative stress. The protein is Chromogranin-A (Chga) of Mus musculus (Mouse).